We begin with the raw amino-acid sequence, 80 residues long: uncharacterized protein (80 aa).

The next 2 helical transmembrane spans lie at 15–35 and 45–65; these read ALGLTLLYLAVWLVAAYLSGV and WFEMACILTPLLFIGLCWAMV.

The protein to H.influenzae HI_0974B.

The protein localises to the cell membrane. This is an uncharacterized protein from Escherichia coli (strain K12).